The following is a 715-amino-acid chain: Ribosomal RNA large subunit methyltransferase K/L (715 aa).

The THUMP domain maps to 47-158 (LGYKISLWTR…RDNVTIFLDF (112 aa)).

This sequence belongs to the methyltransferase superfamily. RlmKL family.

The protein localises to the cytoplasm. It catalyses the reaction guanosine(2445) in 23S rRNA + S-adenosyl-L-methionine = N(2)-methylguanosine(2445) in 23S rRNA + S-adenosyl-L-homocysteine + H(+). It carries out the reaction guanosine(2069) in 23S rRNA + S-adenosyl-L-methionine = N(2)-methylguanosine(2069) in 23S rRNA + S-adenosyl-L-homocysteine + H(+). Its function is as follows. Specifically methylates the guanine in position 2445 (m2G2445) and the guanine in position 2069 (m7G2069) of 23S rRNA. In Colwellia psychrerythraea (strain 34H / ATCC BAA-681) (Vibrio psychroerythus), this protein is Ribosomal RNA large subunit methyltransferase K/L.